The following is a 195-amino-acid chain: Cytochrome b-245 light chain (195 aa).

The Cytoplasmic portion of the chain corresponds to 2-7 (GQIEWA). Residues 8–30 (MWANEQALASGLILITGGIVATA) form a helical membrane-spanning segment. The Extracellular segment spans residues 31–35 (GRFTQ). A helical transmembrane segment spans residues 36–53 (WYFGAYSIVAGVFVCLLE). The Cytoplasmic segment spans residues 54 to 69 (YPRGKRKKGSTMERWG). The stretch at 70–80 (QKYMTAVVKLF) is an intramembrane region. The Cytoplasmic segment spans residues 81-86 (GPFTRN). The chain crosses the membrane as a helical span at residues 87–104 (YYVRAVLHLLLSVPAGFL). Residue Leu-105 is a topological domain, extracellular. A helical transmembrane segment spans residues 106–126 (ATILGTACLAIASGIYLLAAV). The Cytoplasmic portion of the chain corresponds to 127–195 (RGEQWTPIEP…NPIPVTDEVV (69 aa)). The disordered stretch occupies residues 134–195 (IEPKPRERPQ…NPIPVTDEVV (62 aa)). At Thr-147 the chain carries Phosphothreonine. A Glycyl lysine isopeptide (Lys-Gly) (interchain with G-Cter in ubiquitin) cross-link involves residue Lys-149. Residue Ser-168 is modified to Phosphoserine.

The protein belongs to the p22phox family. Component of the phagocyte NADPH oxidase core complex/cytochrome b558 complex, composed of CYBB (heavy chain (beta)) and CYBA (light chain (alpha)). Component of the phagocyte NADPH oxidase complex composed of an obligatory core heterodimer formed by the membrane proteins CYBA and CYBB and the cytosolic regulatory subunits NCF1/p47-phox, NCF2/p67-phox, NCF4/p40-phox and the small GTPase RAC1 or RAC2. Interacts with NCF1 (via SH3 domain). Interacts with SH3PXD2A. Interacts with DUOX1, DUOX2 and TPO. Interacts with NOX4; this interaction mediates superoxide generation. Interacts with calprotectin (S100A8/9). Interacts with GBP7. Interacts with NOXO1. Forms a heterodimer with NOX3 and is essential for activity and cell membrane localization of NOX3. Interacts with NOX1. Post-translationally, phosphorylation at Thr-147 enhances NADPH oxidase activity by promoting NCF1/p47-phox binding. Ubiquitinated at Lys-149 likely by RNF145.

It is found in the cell membrane. Its function is as follows. Subunit of NADPH oxidase complexes that is required for the NADPH oxidase activity that generates, in various cell types, superoxide from molecular oxygen utilizing NADPH as an electron donor. Subunit of the phagocyte NADPH oxidase complex that mediates the transfer of electrons from cytosolic NADPH to O2 to produce the superoxide anion (O2(-)). In the activated complex, electrons are first transferred from NADPH to flavin adenine dinucleotide (FAD) and subsequently transferred via two heme molecules to molecular oxygen, producing superoxide through an outer-sphere reaction. Activation of the NADPH oxidase complex is initiated by the assembly of cytosolic subunits of the NADPH oxidase complex with the core NADPH oxidase complex to form a complex at the plasma membrane or phagosomal membrane. This activation process is initiated by phosphorylation dependent binding of the cytosolic NCF1/p47-phox subunit to the C-terminus of CYBA/p22-phox. Aassociates with NOX3 to form a functional NADPH oxidase constitutively generating superoxide. The sequence is that of Cytochrome b-245 light chain from Homo sapiens (Human).